The primary structure comprises 261 residues: Insulin-like growth factor-binding protein-related protein 1 (261 aa).

The N-terminal stretch at 1 to 17 (MWIPLLLVALVVPAIRC) is a signal peptide. The IGFBP N-terminal domain maps to 18–101 (ERKCGECNPE…DPPEAMCVCL (84 aa)). Intrachain disulfides connect Cys-21-Cys-45, Cys-24-Cys-47, Cys-29-Cys-48, Cys-36-Cys-51, Cys-59-Cys-82, Cys-76-Cys-98, Cys-100-Cys-118, and Cys-107-Cys-139. Residues 70–141 (NRGHGPCGEY…RAMHRGPCKS (72 aa)) enclose the Kazal-like domain. Positions 143–243 (PKITSPPEEA…GESSAAARVV (101 aa)) constitute an Ig-like C2-type domain. N-linked (GlcNAc...) asparagine glycosylation is present at Asn-154. The cysteines at positions 164 and 227 are disulfide-linked.

In terms of tissue distribution, expressed by the venom gland.

The protein resides in the secreted. The sequence is that of Insulin-like growth factor-binding protein-related protein 1 from Cupiennius salei (American wandering spider).